The sequence spans 83 residues: Large ribosomal subunit protein uL23 (83 aa).

Belongs to the universal ribosomal protein uL23 family. Part of the 50S ribosomal subunit. Contacts protein L29.

Binds to 23S rRNA. One of the proteins that surrounds the polypeptide exit tunnel on the outside of the ribosome. The sequence is that of Large ribosomal subunit protein uL23 from Thermoplasma volcanium (strain ATCC 51530 / DSM 4299 / JCM 9571 / NBRC 15438 / GSS1).